The sequence spans 208 residues: Small ribosomal subunit protein uS4A (208 aa).

Positions 98–161 constitute an S4 RNA-binding domain; it reads LRLDNVVFRM…RKVLRISEAL (64 aa).

Belongs to the universal ribosomal protein uS4 family. Part of the 30S ribosomal subunit. Contacts protein S5. The interaction surface between S4 and S5 is involved in control of translational fidelity.

Its function is as follows. One of the primary rRNA binding proteins, it binds directly to 16S rRNA where it nucleates assembly of the body of the 30S subunit. With S5 and S12 plays an important role in translational accuracy. The sequence is that of Small ribosomal subunit protein uS4A from Myxococcus xanthus (strain DK1622).